The sequence spans 155 residues: Transcriptional repressor NrdR (155 aa).

A zinc finger lies at 3–34 (CPFCHAEETKVVDSRLVADGAQVRRRRECLEC). One can recognise an ATP-cone domain in the interval 49–139 (PLIIKRDGRR…VYKRFKDVSD (91 aa)).

It belongs to the NrdR family. Zn(2+) is required as a cofactor.

In terms of biological role, negatively regulates transcription of bacterial ribonucleotide reductase nrd genes and operons by binding to NrdR-boxes. The protein is Transcriptional repressor NrdR of Legionella pneumophila (strain Paris).